We begin with the raw amino-acid sequence, 103 residues long: Small ribosomal subunit protein uS10 (103 aa).

It belongs to the universal ribosomal protein uS10 family. Part of the 30S ribosomal subunit.

Its function is as follows. Involved in the binding of tRNA to the ribosomes. In Wigglesworthia glossinidia brevipalpis, this protein is Small ribosomal subunit protein uS10.